The sequence spans 338 residues: Ketol-acid reductoisomerase (NADP(+)) (338 aa).

Residues 1–181 enclose the KARI N-terminal Rossmann domain; the sequence is MNVYYDKDCD…GGGRSGIIET (181 aa). NADP(+) contacts are provided by residues 24–27, Arg-47, Ser-50, Ser-52, and 82–85; these read YGSQ and DEFQ. The active site involves His-107. Gly-133 lines the NADP(+) pocket. A KARI C-terminal knotted domain is found at 182–327; it reads TFKDETETDL…AKLRGMMPWI (146 aa). Residues Asp-190, Glu-194, Glu-226, and Glu-230 each contribute to the Mg(2+) site. Ser-251 is a binding site for substrate.

The protein belongs to the ketol-acid reductoisomerase family. Mg(2+) is required as a cofactor.

It catalyses the reaction (2R)-2,3-dihydroxy-3-methylbutanoate + NADP(+) = (2S)-2-acetolactate + NADPH + H(+). The catalysed reaction is (2R,3R)-2,3-dihydroxy-3-methylpentanoate + NADP(+) = (S)-2-ethyl-2-hydroxy-3-oxobutanoate + NADPH + H(+). Its pathway is amino-acid biosynthesis; L-isoleucine biosynthesis; L-isoleucine from 2-oxobutanoate: step 2/4. The protein operates within amino-acid biosynthesis; L-valine biosynthesis; L-valine from pyruvate: step 2/4. In terms of biological role, involved in the biosynthesis of branched-chain amino acids (BCAA). Catalyzes an alkyl-migration followed by a ketol-acid reduction of (S)-2-acetolactate (S2AL) to yield (R)-2,3-dihydroxy-isovalerate. In the isomerase reaction, S2AL is rearranged via a Mg-dependent methyl migration to produce 3-hydroxy-3-methyl-2-ketobutyrate (HMKB). In the reductase reaction, this 2-ketoacid undergoes a metal-dependent reduction by NADPH to yield (R)-2,3-dihydroxy-isovalerate. The chain is Ketol-acid reductoisomerase (NADP(+)) from Psychrobacter cryohalolentis (strain ATCC BAA-1226 / DSM 17306 / VKM B-2378 / K5).